Consider the following 344-residue polypeptide: Olfactory receptor class A-like protein 4 (344 aa).

The Extracellular portion of the chain corresponds to 1 to 10 (MSEVLTVDAV). The helical transmembrane segment at 11–31 (LFGLLVFSGIIGNIMVIYVVF) threads the bilayer. The Cytoplasmic segment spans residues 32 to 47 (DCAKLCASRHLPPSDT). The helical transmembrane segment at 48–68 (ILVHLCLANLLTSVFRTVPIF) threads the bilayer. Residues 69–84 (VSDLGLQVWLTAGWCR) are Extracellular-facing. An intrachain disulfide couples Cys83 to Cys169. Residues 85 to 105 (VFMLLWVWWRAVGCWVTLALS) form a helical membrane-spanning segment. Residues 106 to 130 (AFHCATLRRQHVSMGPLGHSRERRR) are Cytoplasmic-facing. A helical membrane pass occupies residues 131 to 151 (VWVVLAVVWAANLLFSLPALV). At 152–186 (YTTQVRGNATVELMVISCTTRPLLGCVWEFPTFQQ) the chain is on the extracellular side. An N-linked (GlcNAc...) asparagine glycan is attached at Asn159. The helical transmembrane segment at 187–207 (GYAFASSSLALNEVLPLVLMV) threads the bilayer. At 208 to 246 (GTNLATLQALGKHIRTVRAGGSTGAELDRHVSSERKAGH) the chain is on the cytoplasmic side. Residues 247–267 (VIMALVALFVGCWVLQVAAVT) traverse the membrane as a helical segment. Topologically, residues 268-279 (YYNHNRGAHAEG) are extracellular. A helical transmembrane segment spans residues 280–300 (LLTVAHFSASLFVGFSPLVVA). At 301–344 (LGHGKLRRRISGILQSCMHRLKQTQDKPAEITEKDGRTTQSAMK) the chain is on the cytoplasmic side. Basic and acidic residues predominate over residues 324–337 (TQDKPAEITEKDGR). The segment at 324–344 (TQDKPAEITEKDGRTTQSAMK) is disordered.

This sequence belongs to the G-protein coupled receptor 1 family. In terms of tissue distribution, highly expressed in the olfactory rosette. Specifically localizes to crypt neurons in the olfactory neuroepithelium. Colocalizes with the inhibitory G-protein gnaia in crypt neurons. Not detected in other tissues tested.

The protein resides in the cell membrane. In terms of biological role, probable olfactory receptor. The chain is Olfactory receptor class A-like protein 4 (ora4) from Danio rerio (Zebrafish).